A 222-amino-acid polypeptide reads, in one-letter code: DnaJ homolog subfamily B member 9 (222 aa).

Positions 1–23 (MATPQSVFVFAICILMITELILA) are cleaved as a signal peptide. Residues 26 to 90 (SYYDILGVPK…NSRKEYDTIG (65 aa)) enclose the J domain. Residues 91-222 (HSAFTNGKGQ…VTTYTDCSGQ (132 aa)) form a divergent targeting domain region. S133 bears the Phosphoserine mark.

In terms of assembly, interacts with HSPA5/BiP; interaction is direct. Interacts with ERN1/IRE1 (via the luminal region). Interacts with DERL1. Post-translationally, not N-glycosylated.

Its subcellular location is the endoplasmic reticulum lumen. In terms of biological role, co-chaperone for Hsp70 protein HSPA5/BiP that acts as a key repressor of the ERN1/IRE1-mediated unfolded protein response (UPR). J domain-containing co-chaperones stimulate the ATPase activity of Hsp70 proteins and are required for efficient substrate recognition by Hsp70 proteins. In the unstressed endoplasmic reticulum, interacts with the luminal region of ERN1/IRE1 and selectively recruits HSPA5/BiP: HSPA5/BiP disrupts the dimerization of the active ERN1/IRE1 luminal region, thereby inactivating ERN1/IRE1. Also involved in endoplasmic reticulum-associated degradation (ERAD) of misfolded proteins. Required for survival of B-cell progenitors and normal antibody production. The chain is DnaJ homolog subfamily B member 9 from Mus musculus (Mouse).